An 82-amino-acid chain; its full sequence is Small ribosomal subunit protein bS18 (82 aa).

It belongs to the bacterial ribosomal protein bS18 family. In terms of assembly, part of the 30S ribosomal subunit. Forms a tight heterodimer with protein bS6.

Binds as a heterodimer with protein bS6 to the central domain of the 16S rRNA, where it helps stabilize the platform of the 30S subunit. This is Small ribosomal subunit protein bS18 from Rhizobium meliloti (strain 1021) (Ensifer meliloti).